We begin with the raw amino-acid sequence, 184 residues long: 1,6-anhydro-N-acetylmuramyl-L-alanine amidase AmpD (184 aa).

Residues Gln30–Gly171 enclose the N-acetylmuramoyl-L-alanine amidase domain. His38 contacts Zn(2+). Glu120 (proton acceptor) is an active-site residue. Zn(2+) is bound by residues His159 and Asp169.

The protein belongs to the N-acetylmuramoyl-L-alanine amidase 2 family. Zn(2+) serves as cofactor.

It is found in the cytoplasm. It catalyses the reaction Hydrolyzes the link between N-acetylmuramoyl residues and L-amino acid residues in certain cell-wall glycopeptides.. Involved in cell wall peptidoglycan recycling. Specifically cleaves the amide bond between the lactyl group of N-acetylmuramic acid and the alpha-amino group of the L-alanine in degradation products containing an anhydro N-acetylmuramyl moiety. This is 1,6-anhydro-N-acetylmuramyl-L-alanine amidase AmpD (ampD) from Haemophilus influenzae (strain ATCC 51907 / DSM 11121 / KW20 / Rd).